Consider the following 1358-residue polypeptide: Phosphoinositide 3-kinase regulatory subunit 4 (1358 aa).

Gly-2 carries the N-myristoyl glycine lipid modification. Positions 26 to 324 (FEYDKSLGST…AFPEVFYTFL (299 aa)) constitute a Protein kinase domain. ATP is bound by residues 32–40 (LGSTRFFKV) and Lys-53. The active-site Proton acceptor is the Asp-148. HEAT repeat units lie at residues 413–450 (ILLD…LVQE), 458–495 (IYPE…TALR), 572–610 (KAND…YVGW), and 612–648 (SSSI…LGLL). Phosphoserine is present on residues Ser-808, Ser-813, Ser-853, and Ser-865. Positions 875–899 (LPKTSDHEVVPTGKSPRSESSAGVC) are disordered. 6 WD repeats span residues 991–1030 (EHKS…GKTT), 1040–1079 (RIGG…LPKS), 1093–1134 (KEDG…NAWT), 1139–1178 (LKSG…PISS), 1182–1223 (PSRA…RRLT), and 1237–1278 (PSPH…RSYV). Residues 1307–1326 (KQKVGPSDDTPRRGPESLPV) are disordered. The span at 1315 to 1326 (DTPRRGPESLPV) shows a compositional bias: basic and acidic residues. Thr-1316 is subject to Phosphothreonine. One copy of the WD 7 repeat lies at 1327–1358 (GHHDIITDIATFQTTQGFIVTASRDGIVKVWK).

This sequence belongs to the protein kinase superfamily. Ser/Thr protein kinase family. In terms of assembly, component of the PI3K (PI3KC3/PI3K-III/class III phosphatidylinositol 3-kinase) complex the core of which is composed of the catalytic subunit PIK3C3, the regulatory subunit PIK3R4 and BECN1 associating with additional regulatory/auxiliary subunits to form alternative complex forms. Alternative complex forms containing a fourth regulatory subunit in a mutually exclusive manner are PI3K complex I (PI3KC3-C1) containing ATG14, and PI3K complex II (PI3KC3-C2) containing UVRAG. PI3KC3-C1 displays a V-shaped architecture with PIK3R4 serving as a bridge between PIK3C3 and the ATG14:BECN1 subcomplex. Both, PI3KC3-C1 and PI3KC3-C2, can associate with further regulatory subunits, such as RUBCN, SH3GLB1/Bif-1, AMBRA1 and NRBF2. PI3KC3-C1 probably associates with PIK3CB. Interacts with RAB7A in the presence of PIK3C3/VPS34. Interacts with NRBF2. Interacts with ARMC3. The cofactor is Mn(2+). In terms of processing, myristoylated. Post-translationally, probably autophosphorylated.

Its subcellular location is the late endosome. It is found in the cytoplasmic vesicle. The protein localises to the autophagosome. The protein resides in the membrane. It catalyses the reaction L-seryl-[protein] + ATP = O-phospho-L-seryl-[protein] + ADP + H(+). The catalysed reaction is L-threonyl-[protein] + ATP = O-phospho-L-threonyl-[protein] + ADP + H(+). Functionally, regulatory subunit of the PI3K complex that mediates formation of phosphatidylinositol 3-phosphate; different complex forms are believed to play a role in multiple membrane trafficking pathways: PI3KC3-C1 is involved in initiation of autophagosomes and PI3KC3-C2 in maturation of autophagosomes and endocytosis. Involved in regulation of degradative endocytic trafficking and cytokinesis, probably in the context of PI3KC3-C2. In Rattus norvegicus (Rat), this protein is Phosphoinositide 3-kinase regulatory subunit 4 (Pik3r4).